The primary structure comprises 172 residues: NADH-ubiquinone oxidoreductase chain 6 (172 aa).

Helical transmembrane passes span methionine 1–leucine 21, proline 25–tyrosine 45, glycine 48–valine 68, valine 86–asparagine 106, phenylalanine 108–alanine 128, and leucine 141–valine 161.

This sequence belongs to the complex I subunit 6 family.

The protein resides in the mitochondrion membrane. It carries out the reaction a ubiquinone + NADH + 5 H(+)(in) = a ubiquinol + NAD(+) + 4 H(+)(out). Its function is as follows. Core subunit of the mitochondrial membrane respiratory chain NADH dehydrogenase (Complex I) that is believed to belong to the minimal assembly required for catalysis. Complex I functions in the transfer of electrons from NADH to the respiratory chain. The immediate electron acceptor for the enzyme is believed to be ubiquinone. The protein is NADH-ubiquinone oxidoreductase chain 6 (MT-ND6) of Petromyzon marinus (Sea lamprey).